A 935-amino-acid chain; its full sequence is C-1-tetrahydrofolate synthase, cytoplasmic (935 aa).

Met1 is modified (N-acetylmethionine). The segment at 2–291 (APAEILNGRE…MLMQSTVESA (290 aa)) is methylenetetrahydrofolate dehydrogenase and methenyltetrahydrofolate cyclohydrolase (D/C) domain. Substrate-binding positions include 52–56 (YINVK) and 99–101 (VQL). Lys56 is an active-site residue. NADP(+) is bound by residues 172 to 174 (GRS) and Ser197. 272–276 (PGGVG) serves as a coordination point for substrate. The segment at 310 to 935 (LNLKTPDPSD…PETQQVNGLF (626 aa)) is formyltetrahydrofolate synthetase domain. Ser318 carries the phosphoserine modification. Residue 380–387 (TPLGEGKS) coordinates ATP. Phosphoserine is present on residues Ser413 and Ser490.

The protein in the N-terminal section; belongs to the tetrahydrofolate dehydrogenase/cyclohydrolase family. In the C-terminal section; belongs to the formate--tetrahydrofolate ligase family. Homodimer.

The protein localises to the cytoplasm. The enzyme catalyses (6R)-5,10-methylene-5,6,7,8-tetrahydrofolate + NADP(+) = (6R)-5,10-methenyltetrahydrofolate + NADPH. It catalyses the reaction (6R)-5,10-methenyltetrahydrofolate + H2O = (6R)-10-formyltetrahydrofolate + H(+). The catalysed reaction is (6S)-5,6,7,8-tetrahydrofolate + formate + ATP = (6R)-10-formyltetrahydrofolate + ADP + phosphate. Its pathway is one-carbon metabolism; tetrahydrofolate interconversion. Functionally, trifunctional enzyme that catalyzes the interconversion of three forms of one-carbon-substituted tetrahydrofolate: (6R)-5,10-methylene-5,6,7,8-tetrahydrofolate, 5,10-methenyltetrahydrofolate and (6S)-10-formyltetrahydrofolate. These derivatives of tetrahydrofolate are differentially required in nucleotide and amino acid biosynthesis, (6S)-10-formyltetrahydrofolate being required for purine biosynthesis while (6R)-5,10-methylene-5,6,7,8-tetrahydrofolate is used for serine and methionine biosynthesis for instance. The sequence is that of C-1-tetrahydrofolate synthase, cytoplasmic (MTHFD1) from Pongo abelii (Sumatran orangutan).